Consider the following 396-residue polypeptide: Interleukin-3 receptor subunit alpha (396 aa).

Residues 1–16 (MAANLWLILGLLASHS) form the signal peptide. Residues 17–331 (SDLAAVREAP…VCPPEVMPVK (315 aa)) are Extracellular-facing. Intrachain disulfides connect Cys62–Cys79, Cys87–Cys223, Cys125–Cys134, Cys165–Cys187, and Cys245–Cys323. An N-linked (GlcNAc...) asparagine glycan is attached at Asn91. Residues Asn213, Asn246, Asn272, and Asn283 are each glycosylated (N-linked (GlcNAc...) asparagine). The WSXWS motif motif lies at 312–316 (LSSWS). The helical transmembrane segment at 332–355 (TALVTSVATVLGAGLVAAGLLLWW) threads the bilayer. Over 356-396 (RKSLLYRLCPPIPRLRLPLAGEMVVWEPALEDCEVTPVTDA) the chain is Cytoplasmic. Lys357 participates in a covalent cross-link: Glycyl lysine isopeptide (Lys-Gly) (interchain with G-Cter in ubiquitin). Residues 363–371 (LCPPIPRLR) carry the Box 1 motif motif.

The protein belongs to the type I cytokine receptor family. Type 5 subfamily. As to quaternary structure, interacts with IL3. Heterodimer of an alpha and a beta subunit. The beta subunit is common to the IL3, IL5 and GM-CSF receptors. In terms of processing, ubiquitinated at Lys-357 by RNFT2 in response to IL3. Ubiquitination leads ligand-induced degradation by the proteasome. Ubiquitinated by RNF128 via 'Lys-27'-linked polyubiquitination, facilitating its degradation through the lysosomal pathway.

Its subcellular location is the cell membrane. It is found in the endomembrane system. Its function is as follows. Cell surface receptor for IL3 expressed on hematopoietic progenitor cells, monocytes and B-lymphocytes that controls the production and differentiation of hematopoietic progenitor cells into lineage-restricted cells. Ligand stimulation rapidly induces hetrodimerization with IL3RB, phosphorylation and enzyme activity of effector proteins such as JAK2 and PI3K that play a role in signaling cell proliferation and differentiation. Activation of JAK2 leads to STAT5-mediated transcriptional program. The chain is Interleukin-3 receptor subunit alpha (Il3ra) from Mus musculus (Mouse).